A 180-amino-acid chain; its full sequence is ATP-dependent protease subunit HslV (180 aa).

Residue Thr5 is part of the active site. Na(+) contacts are provided by Gly165, Cys168, and Thr171.

The protein belongs to the peptidase T1B family. HslV subfamily. In terms of assembly, a double ring-shaped homohexamer of HslV is capped on each side by a ring-shaped HslU homohexamer. The assembly of the HslU/HslV complex is dependent on binding of ATP.

The protein localises to the cytoplasm. The catalysed reaction is ATP-dependent cleavage of peptide bonds with broad specificity.. With respect to regulation, allosterically activated by HslU binding. Functionally, protease subunit of a proteasome-like degradation complex believed to be a general protein degrading machinery. The sequence is that of ATP-dependent protease subunit HslV from Helicobacter hepaticus (strain ATCC 51449 / 3B1).